A 915-amino-acid chain; its full sequence is Isoleucine--tRNA ligase (915 aa).

A 'HIGH' region motif is present at residues 57-67 (PYANGNLHMGH). E554 serves as a coordination point for L-isoleucyl-5'-AMP. The 'KMSKS' region signature appears at 595 to 599 (KMSKS). K598 lines the ATP pocket. C885, C888, C905, and C908 together coordinate Zn(2+).

This sequence belongs to the class-I aminoacyl-tRNA synthetase family. IleS type 1 subfamily. In terms of assembly, monomer. Zn(2+) is required as a cofactor.

It is found in the cytoplasm. It catalyses the reaction tRNA(Ile) + L-isoleucine + ATP = L-isoleucyl-tRNA(Ile) + AMP + diphosphate. Functionally, catalyzes the attachment of isoleucine to tRNA(Ile). As IleRS can inadvertently accommodate and process structurally similar amino acids such as valine, to avoid such errors it has two additional distinct tRNA(Ile)-dependent editing activities. One activity is designated as 'pretransfer' editing and involves the hydrolysis of activated Val-AMP. The other activity is designated 'posttransfer' editing and involves deacylation of mischarged Val-tRNA(Ile). The sequence is that of Isoleucine--tRNA ligase from Staphylococcus carnosus (strain TM300).